A 432-amino-acid chain; its full sequence is Histidinol dehydrogenase (432 aa).

NAD(+) contacts are provided by tyrosine 133, glutamine 194, and asparagine 217. 3 residues coordinate substrate: serine 240, glutamine 262, and histidine 265. Residues glutamine 262 and histidine 265 each contribute to the Zn(2+) site. Catalysis depends on proton acceptor residues glutamate 330 and histidine 331. Positions 331, 364, 418, and 423 each coordinate substrate. Position 364 (aspartate 364) interacts with Zn(2+). A Zn(2+)-binding site is contributed by histidine 423.

The protein belongs to the histidinol dehydrogenase family. Requires Zn(2+) as cofactor.

It carries out the reaction L-histidinol + 2 NAD(+) + H2O = L-histidine + 2 NADH + 3 H(+). The protein operates within amino-acid biosynthesis; L-histidine biosynthesis; L-histidine from 5-phospho-alpha-D-ribose 1-diphosphate: step 9/9. Its function is as follows. Catalyzes the sequential NAD-dependent oxidations of L-histidinol to L-histidinaldehyde and then to L-histidine. In Nitrosomonas europaea (strain ATCC 19718 / CIP 103999 / KCTC 2705 / NBRC 14298), this protein is Histidinol dehydrogenase.